Here is a 293-residue protein sequence, read N- to C-terminus: Phospholipid scramblase 2 (293 aa).

Residues M1–G39 are disordered. The tract at residues M1 to P66 is proline-rich domain (PRD). Topologically, residues M1–K270 are cytoplasmic. T143 carries the post-translational modification Phosphothreonine; by PKC. S-palmitoyl cysteine attachment occurs at residues C166, C167, C170, and C171. Residues M271–F287 form a helical membrane-spanning segment. Over E288–E293 the chain is Extracellular.

The protein belongs to the phospholipid scramblase family. Ca(2+) is required as a cofactor.

It localises to the membrane. It carries out the reaction a 1,2-diacyl-sn-glycero-3-phosphocholine(in) = a 1,2-diacyl-sn-glycero-3-phosphocholine(out). May catalyze calcium-induced ATP-independent rapid bidirectional and non-specific movement of phospholipids (lipid scrambling or lipid flip-flop) between the inner and outer leaflet of the plasma membrane. This is Phospholipid scramblase 2 from Bos taurus (Bovine).